Here is a 545-residue protein sequence, read N- to C-terminus: Cytochrome P450 monooxygenase sdnB (545 aa).

A glycan (N-linked (GlcNAc...) asparagine) is linked at asparagine 5. The chain crosses the membrane as a helical span at residues 30–50 (SILALTPLQGIALFLCLFWGY). An N-linked (GlcNAc...) asparagine glycan is attached at asparagine 276. The chain crosses the membrane as a helical span at residues 322–342 (LPILILIILVPAAHTTAMGIS). N-linked (GlcNAc...) asparagine glycosylation is found at asparagine 393 and asparagine 476. Residue cysteine 486 coordinates heme.

It belongs to the cytochrome P450 family. Heme is required as a cofactor.

The protein localises to the membrane. It functions in the pathway antibiotic biosynthesis. Cytochrome P450 monooxygenase; part of the gene cluster that mediates the biosynthesis of sordarin and hypoxysordarin, glycoside antibiotics with a unique tetracyclic diterpene aglycone structure. First, the geranylgeranyl diphosphate synthase sdnC constructs GGDP from farnesyl diphosphate and isopentenyl diphosphate. The diterpene cyclase sdnA then catalyzes the cyclization of GGDP to afford cycloaraneosene. Cycloaraneosene is then hydroxylated four times by the putative cytochrome P450 monooxygenases sdnB, sdnE, sdnF and sdnH to give a hydroxylated cycloaraneosene derivative such as cycloaraneosene-8,9,13,19-tetraol. Although the order of the hydroxylations is unclear, at least C8, C9 and C13 of the cycloaraneosene skeleton are hydroxylated before the sordaricin formation. Dehydration of the 13-hydroxy group of the hydroxylated cycloaraneosene derivative might be catalyzed by an unassigned hypothetical protein such as sdnG and sdnP to construct the cyclopentadiene moiety. The FAD-dependent oxidoreductase sdnN is proposed to catalyze the oxidation at C9 of the hydroxylated cycloaraneosene derivative and also catalyze the Baeyer-Villiger oxidation to give the lactone intermediate. The presumed lactone intermediate would be hydrolyzed to give an acrolein moiety and a carboxylate moiety. Then, [4+2]cycloaddition would occur between the acrolein moiety and the cyclopentadiene moiety to give sordaricin. SdnN might also be involved in the [4+2]cycloaddition after the hypothesized oxidation to accommodate the oxidized product and prompt the [4+2]cycloaddition. GDP-6-deoxy-D-altrose may be biosynthesized from GDP-D-mannose by the putative GDP-mannose-4,6-dehydratase sdnI and the short-chain dehydrogenase sdnK. The glycosyltransferase sdnJ catalyzes the attachment of 6-deoxy-D-altrose onto the 19-hydroxy group of sordaricin to give 4'-O-demethylsordarin. The methyltransferase sdnD would complete the biosynthesis of sordarin. Sordarin can be further modified into hypoxysordarin. The unique acyl chain at the 3'-hydroxy group of hypoxysordarin would be constructed by an iterative type I PKS sdnO and the trans-acting polyketide methyltransferase sdnL. SdnL would be responsible for the introduction of an alpha-methyl group of the polyketide chain. Alternatively, the beta-lactamase-like protein sdnR might be responsible for the cleavage and transfer of the polyketide chain from the PKS sdnO to sordarin. Two putative cytochrome P450 monooxygenases, sdnQ and sdnT, might catalyze the epoxidations of the polyketide chain to complete the biosynthesis of hypoxysordarin. Transcriptional regulators sdnM and sdnS are presumably encoded for the transcriptional regulation of the expression of the sdn gene cluster. The sequence is that of Cytochrome P450 monooxygenase sdnB from Sordaria araneosa (Pleurage araneosa).